We begin with the raw amino-acid sequence, 122 residues long: Large ribosomal subunit protein uL14 (122 aa).

It belongs to the universal ribosomal protein uL14 family. As to quaternary structure, part of the 50S ribosomal subunit. Forms a cluster with proteins L3 and L19. In the 70S ribosome, L14 and L19 interact and together make contacts with the 16S rRNA in bridges B5 and B8.

In terms of biological role, binds to 23S rRNA. Forms part of two intersubunit bridges in the 70S ribosome. The protein is Large ribosomal subunit protein uL14 of Prosthecochloris aestuarii (strain DSM 271 / SK 413).